The sequence spans 130 residues: MLIDMLKGKIHRATVTQADLEYVGSITIDETLMEASGILEYEKVQIADVNNGARFETYVIAGPRDSGVICLNGATARCASVGDKVIIMNYAQFEPEEAKHAKPYVVLVDDENRLTKRVRYEKHGLLAEEL.

Catalysis depends on serine 25, which acts as the Schiff-base intermediate with substrate; via pyruvic acid. Serine 25 carries the post-translational modification Pyruvic acid (Ser). Threonine 57 contributes to the substrate binding site. Catalysis depends on tyrosine 58, which acts as the Proton donor. 73–75 (GAT) serves as a coordination point for substrate.

It belongs to the PanD family. In terms of assembly, heterooctamer of four alpha and four beta subunits. The cofactor is pyruvate. Post-translationally, is synthesized initially as an inactive proenzyme, which is activated by self-cleavage at a specific serine bond to produce a beta-subunit with a hydroxyl group at its C-terminus and an alpha-subunit with a pyruvoyl group at its N-terminus.

The protein localises to the cytoplasm. The enzyme catalyses L-aspartate + H(+) = beta-alanine + CO2. It participates in cofactor biosynthesis; (R)-pantothenate biosynthesis; beta-alanine from L-aspartate: step 1/1. Its function is as follows. Catalyzes the pyruvoyl-dependent decarboxylation of aspartate to produce beta-alanine. The sequence is that of Aspartate 1-decarboxylase from Lactiplantibacillus plantarum (strain ATCC BAA-793 / NCIMB 8826 / WCFS1) (Lactobacillus plantarum).